The following is a 1153-amino-acid chain: AP-3 complex subunit delta-1 (1153 aa).

At Ala-2 the chain carries N-acetylalanine. 11 HEAT repeats span residues Lys-34–Asp-71, Phe-77–Asn-114, Asp-142–Glu-179, Ser-180–Lys-216, Arg-254–Ser-292, Ala-299–Lys-336, Val-338–Leu-373, Glu-375–Tyr-409, Thr-431–Leu-468, Gln-497–Gln-535, and Ala-548–Leu-585. Disordered stretches follow at residues Glu-629–Thr-696 and Lys-726–Ser-920. 4 positions are modified to phosphoserine: Ser-632, Ser-634, Ser-636, and Ser-658. Positions Glu-639–Glu-675 are enriched in basic and acidic residues. Residues Glu-659–Asn-679 are a coiled coil. Ser-688 carries the phosphoserine modification. The stretch at Val-725–Arg-756 forms a coiled coil. The span at Lys-726–Asp-740 shows a compositional bias: basic and acidic residues. Basic residues predominate over residues Lys-741–Ser-758. A phosphoserine mark is found at Ser-758 and Ser-759. The residue at position 762 (Thr-762) is a Phosphothreonine. Ser-764, Ala-785, Ser-788, Lys-828, and Ser-829 each carry phosphoserine. Acidic residues predominate over residues Val-777 to Asp-794. A compositionally biased stretch (basic and acidic residues) spans Pro-795–Lys-839. Composition is skewed to basic residues over residues Lys-840–Glu-853 and Glu-863–Lys-879. Residues Lys-845–Ser-869 adopt a coiled-coil conformation. Phosphoserine is present on Val-931.

This sequence belongs to the adaptor complexes large subunit family. In terms of assembly, AP-3 associates with the BLOC-1 complex. Adaptor protein complex 3 (AP-3) is a heterotetramer composed of two large adaptins (delta-type subunit AP3D1 and beta-type subunit AP3B1 or AP3B2), a medium adaptin (mu-type subunit AP3M1 or AP3M2) and a small adaptin (sigma-type subunit APS1 or AP3S2). Interacts with SLC30A2. Interacts with CLN3 (via dileucine motif); this interaction facilitates lysosomal targeting. In terms of tissue distribution, present in all adult tissues examined with the highest levels in skeletal muscle, heart, pancreas and testis.

Its subcellular location is the cytoplasm. The protein resides in the golgi apparatus membrane. Its function is as follows. Part of the AP-3 complex, an adaptor-related complex which is not clathrin-associated. The complex is associated with the Golgi region as well as more peripheral structures. It facilitates the budding of vesicles from the Golgi membrane and may be directly involved in trafficking to lysosomes. Involved in process of CD8+ T-cell and NK cell degranulation. In concert with the BLOC-1 complex, AP-3 is required to target cargos into vesicles assembled at cell bodies for delivery into neurites and nerve terminals. In Homo sapiens (Human), this protein is AP-3 complex subunit delta-1 (AP3D1).